The following is a 302-amino-acid chain: 1D-myo-inositol 2-acetamido-2-deoxy-alpha-D-glucopyranoside deacetylase (302 aa).

Residues His13, Asp16, and His155 each contribute to the Zn(2+) site.

Belongs to the MshB deacetylase family. Zn(2+) is required as a cofactor.

It carries out the reaction 1D-myo-inositol 2-acetamido-2-deoxy-alpha-D-glucopyranoside + H2O = 1D-myo-inositol 2-amino-2-deoxy-alpha-D-glucopyranoside + acetate. Catalyzes the deacetylation of 1D-myo-inositol 2-acetamido-2-deoxy-alpha-D-glucopyranoside (GlcNAc-Ins) in the mycothiol biosynthesis pathway. In Nocardioides sp. (strain ATCC BAA-499 / JS614), this protein is 1D-myo-inositol 2-acetamido-2-deoxy-alpha-D-glucopyranoside deacetylase.